The sequence spans 282 residues: Elongation factor Ts (282 aa).

Residues 80–83 form an involved in Mg(2+) ion dislocation from EF-Tu region; that stretch reads TDFV.

Belongs to the EF-Ts family.

It is found in the cytoplasm. Associates with the EF-Tu.GDP complex and induces the exchange of GDP to GTP. It remains bound to the aminoacyl-tRNA.EF-Tu.GTP complex up to the GTP hydrolysis stage on the ribosome. In Protochlamydia amoebophila (strain UWE25), this protein is Elongation factor Ts.